A 1302-amino-acid chain; its full sequence is Serine-enriched protein (1302 aa).

The 119-residue stretch at 40–158 folds into the BTB domain; it reads CDVTFLVGDT…IHTGCVTLQP (119 aa). Disordered stretches follow at residues 325 to 532, 575 to 624, 648 to 685, 701 to 752, 834 to 858, 1045 to 1090, 1102 to 1163, and 1187 to 1252; these read SIDP…RSPT, PIPP…SVMR, FTRAESGSSGGPLIRQSTFSASPAASSTAAKSAVQKQM, YAKM…SSDE, FTRRSESREPIEPRISEERESDSND, FQRS…RTEN, FSRA…GEEE, and VLTQ…SASP. Positions 337-364 are enriched in basic residues; the sequence is RQHHRHRHHHQSLPKIRKAKSQSFRTRR. Polar residues-rich tracts occupy residues 378-388, 410-430, 437-449, and 472-487; these read LTLNTSLTSGN, SPGSSSQKTPTSLSRQGTLRA, SGQLSISLGTQGR, and GLRSPNDPMTSPTVRS. Positions 589–623 are enriched in basic and acidic residues; that stretch reads KSAEREREAAEAAAREKEKEKEKEAAQPQEKKSVM. A compositionally biased stretch (low complexity) spans 664–680; that stretch reads STFSASPAASSTAAKSA. The segment covering 713 to 723 has biased composition (basic and acidic residues); that stretch reads KRDDEEKEKQK. The span at 736–748 shows a compositional bias: polar residues; the sequence is DLSQTNADQQVGG. Basic and acidic residues predominate over residues 836 to 855; that stretch reads RRSESREPIEPRISEERESD. 2 stretches are compositionally biased toward low complexity: residues 1047-1056 and 1107-1128; these read RSGSSCGGRK and SPLSQQTSSNYSSRDSYDSSGS. Over residues 1187 to 1207 the composition is skewed to polar residues; sequence VLTQQLSTGSMSTPSGYTNGT. A compositionally biased stretch (low complexity) spans 1226-1252; sequence APLSSCGFSSGSEFEPPSPRRAASASP.

This chain is Serine-enriched protein (gprs), found in Drosophila melanogaster (Fruit fly).